The primary structure comprises 224 residues: Large ribosomal subunit protein uL3 (224 aa).

Glutamine 158 carries the post-translational modification N5-methylglutamine.

This sequence belongs to the universal ribosomal protein uL3 family. In terms of assembly, part of the 50S ribosomal subunit. Forms a cluster with proteins L14 and L19. In terms of processing, methylated by PrmB.

One of the primary rRNA binding proteins, it binds directly near the 3'-end of the 23S rRNA, where it nucleates assembly of the 50S subunit. This chain is Large ribosomal subunit protein uL3, found in Acidovorax sp. (strain JS42).